A 472-amino-acid chain; its full sequence is Putative diacyglycerol O-acyltransferase MT3172 (472 aa).

The active-site Proton acceptor is His139. The tract at residues 217–238 is disordered; the sequence is DRRVPPTFDRSAPPGPFQRGLS.

Belongs to the long-chain O-acyltransferase family.

It catalyses the reaction an acyl-CoA + a 1,2-diacyl-sn-glycerol = a triacyl-sn-glycerol + CoA. It functions in the pathway glycerolipid metabolism; triacylglycerol biosynthesis. The protein is Putative diacyglycerol O-acyltransferase MT3172 of Mycobacterium tuberculosis (strain CDC 1551 / Oshkosh).